We begin with the raw amino-acid sequence, 276 residues long: MELPDIPFPITSPDDFYDDPCFNTSDMHFFEDLDPRLVHVGLLKPDDHHHKEDEHIRAPSGHHQAGRCLLWACKACKRKTTNADRRKAATMRERRRLSKVNDAFETLKRCTSTNPNQRLPKVDILRNAISYIESLQGLLRGAGQEGNYYPVMDHYSGDSDASSPRSNCSDGMMDFNGQSCPPRRRNKYDSTYFNEAPNDSRHKKNSVISSLDCLSNIVERITTDTSACPAVQDGSEGSSPCSPGDGSIASENGAPIPSPINCVPALHDPNTIYQVL.

In terms of domain architecture, bHLH spans 84–135; that stretch reads DRRKAATMRERRRLSKVNDAFETLKRCTSTNPNQRLPKVDILRNAISYIESL. Residues 228–253 are disordered; sequence CPAVQDGSEGSSPCSPGDGSIASENG.

As to quaternary structure, efficient DNA binding requires dimerization with another bHLH protein.

It is found in the nucleus. Its function is as follows. May act as a transcriptional activator that promotes transcription of muscle-specific target genes and plays a role in muscle differentiation. The sequence is that of Myoblast determination protein 1 homolog 1 (myod1) from Oncorhynchus mykiss (Rainbow trout).